A 184-amino-acid chain; its full sequence is ATP synthase subunit b, chloroplastic (184 aa).

The helical transmembrane segment at 27-49 (LATNLINLSVVLGVLIFFGKGVL) threads the bilayer.

It belongs to the ATPase B chain family. F-type ATPases have 2 components, F(1) - the catalytic core - and F(0) - the membrane proton channel. F(1) has five subunits: alpha(3), beta(3), gamma(1), delta(1), epsilon(1). F(0) has four main subunits: a(1), b(1), b'(1) and c(10-14). The alpha and beta chains form an alternating ring which encloses part of the gamma chain. F(1) is attached to F(0) by a central stalk formed by the gamma and epsilon chains, while a peripheral stalk is formed by the delta, b and b' chains.

It localises to the plastid. It is found in the chloroplast thylakoid membrane. Its function is as follows. F(1)F(0) ATP synthase produces ATP from ADP in the presence of a proton or sodium gradient. F-type ATPases consist of two structural domains, F(1) containing the extramembraneous catalytic core and F(0) containing the membrane proton channel, linked together by a central stalk and a peripheral stalk. During catalysis, ATP synthesis in the catalytic domain of F(1) is coupled via a rotary mechanism of the central stalk subunits to proton translocation. Component of the F(0) channel, it forms part of the peripheral stalk, linking F(1) to F(0). This Manihot esculenta (Cassava) protein is ATP synthase subunit b, chloroplastic.